Reading from the N-terminus, the 94-residue chain is Large ribosomal subunit protein bL25 (94 aa).

This sequence belongs to the bacterial ribosomal protein bL25 family. In terms of assembly, part of the 50S ribosomal subunit; part of the 5S rRNA/L5/L18/L25 subcomplex. Contacts the 5S rRNA. Binds to the 5S rRNA independently of L5 and L18.

Its function is as follows. This is one of the proteins that binds to the 5S RNA in the ribosome where it forms part of the central protuberance. This chain is Large ribosomal subunit protein bL25, found in Serratia proteamaculans (strain 568).